We begin with the raw amino-acid sequence, 178 residues long: Ribulose bisphosphate carboxylase small subunit, chloroplastic (178 aa).

Residues 1–54 (MASISSSVATVSRTAPAQANMVAPFTGLKSNAAFPTTKKANDFSTLPSNGGRVQ) constitute a chloroplast transit peptide.

The protein belongs to the RuBisCO small chain family. Heterohexadecamer of 8 large and 8 small subunits.

Its subcellular location is the plastid. It localises to the chloroplast. In terms of biological role, ruBisCO catalyzes two reactions: the carboxylation of D-ribulose 1,5-bisphosphate, the primary event in carbon dioxide fixation, as well as the oxidative fragmentation of the pentose substrate. Both reactions occur simultaneously and in competition at the same active site. Although the small subunit is not catalytic it is essential for maximal activity. The sequence is that of Ribulose bisphosphate carboxylase small subunit, chloroplastic from Helianthus annuus (Common sunflower).